The chain runs to 397 residues: Gamma tubulin complex adapter mto2 (397 aa).

Over residues 1–13 (MSEHNYQSDREVA) the composition is skewed to basic and acidic residues. Disordered regions lie at residues 1-44 (MSEH…WRAG), 269-298 (YTSS…PFPS), and 346-397 (RSDP…TPSP). 4 stretches are compositionally biased toward polar residues: residues 22–37 (ASAN…STPR), 269–281 (YTSS…QRMA), 352–369 (RHVS…SPTS), and 382–397 (SPAS…TPSP). Phosphoserine is present on residues Ser-366 and Ser-396.

Interacts with mto1; the interaction is direct and required for efficient binding to the gamma-tubulin complex. Interacts with gamma tubulin complex subunits alp4, alp6 and gtb1.

Its subcellular location is the cytoplasm. The protein localises to the cytoskeleton. It localises to the microtubule organizing center. It is found in the spindle pole body. Acts together with mto1 to promote nucleation of at least a subset of cytoplasmic microtubules, by recruiting the gamma-tubulin complex to the interphase microtubule organizing center (iMTOC) and to the equatorial MTOC (eMTOC) during anaphase. Does not appear to be required for cytoplasmic astral microtubule nucleation from the spindle pole body (SPB). Required to establish the eMTOC, and thereby to tether the cytokinetic actin ring. This Schizosaccharomyces pombe (strain 972 / ATCC 24843) (Fission yeast) protein is Gamma tubulin complex adapter mto2.